The sequence spans 101 residues: Integration host factor subunit beta (101 aa).

The protein belongs to the bacterial histone-like protein family. Heterodimer of an alpha and a beta chain.

In terms of biological role, this protein is one of the two subunits of integration host factor, a specific DNA-binding protein that functions in genetic recombination as well as in transcriptional and translational control. The polypeptide is Integration host factor subunit beta (Maricaulis maris (strain MCS10) (Caulobacter maris)).